The primary structure comprises 217 residues: 3,4-dihydroxy-2-butanone 4-phosphate synthase (217 aa).

D-ribulose 5-phosphate-binding positions include 37-38, D42, 150-154, and E174; these read RE and RRGHT. A Mg(2+)-binding site is contributed by E38. H153 serves as a coordination point for Mg(2+).

The protein belongs to the DHBP synthase family. Homodimer. Mg(2+) serves as cofactor. Mn(2+) is required as a cofactor.

The enzyme catalyses D-ribulose 5-phosphate = (2S)-2-hydroxy-3-oxobutyl phosphate + formate + H(+). Its pathway is cofactor biosynthesis; riboflavin biosynthesis; 2-hydroxy-3-oxobutyl phosphate from D-ribulose 5-phosphate: step 1/1. Functionally, catalyzes the conversion of D-ribulose 5-phosphate to formate and 3,4-dihydroxy-2-butanone 4-phosphate. The protein is 3,4-dihydroxy-2-butanone 4-phosphate synthase of Shewanella baltica (strain OS223).